The primary structure comprises 434 residues: Nuclear receptor subfamily 1 group I member 2 (434 aa).

Residues 38–107 (PQICRVCGDK…RLRKCLESGM (70 aa)) constitute a DNA-binding region (nuclear receptor). NR C4-type zinc fingers lie at residues 41-61 (CRVC…CEGC) and 77-102 (CPFR…LRKC). A Bipartite nuclear localization signal motif is present at residues 66-92 (RRAMKRNARLRCPFRKGACEITRKTRR). Residues 108-145 (KKEMIMSDEAVEERRALIKRKKSERTGTQPLGVQGLTE) form a hinge region. In terms of domain architecture, NR LBD spans 146–433 (EQRMMIRELM…LMQELFGITG (288 aa)). Hyperforin-binding positions include S247, 285-288 (QLRF), and H407.

Belongs to the nuclear hormone receptor family. NR1 subfamily. In terms of assembly, heterodimer with RXR. Interacts with NCOA1. Interacts (via domain NR LBD) with CRY1 and CRY2 in a ligand-dependent manner. In terms of tissue distribution, expressed in liver, colon and small intestine.

It is found in the nucleus. Nuclear receptor that binds and is activated by variety of endogenous and xenobiotic compounds. Transcription factor that activates the transcription of multiple genes involved in the metabolism and secretion of potentially harmful xenobiotics, drugs and endogenous compounds. Activated by the antibiotic rifampicin and various plant metabolites, such as hyperforin, guggulipid, colupulone, and isoflavones. Response to specific ligands is species-specific. Activated by naturally occurring steroids, such as pregnenolone and progesterone. Binds to a response element in the promoters of the CYP3A4 and ABCB1/MDR1 genes. The protein is Nuclear receptor subfamily 1 group I member 2 (NR1I2) of Homo sapiens (Human).